The following is a 66-amino-acid chain: Large ribosomal subunit protein bL32 (66 aa).

Belongs to the bacterial ribosomal protein bL32 family.

The sequence is that of Large ribosomal subunit protein bL32 from Acetivibrio thermocellus (strain ATCC 27405 / DSM 1237 / JCM 9322 / NBRC 103400 / NCIMB 10682 / NRRL B-4536 / VPI 7372) (Clostridium thermocellum).